The sequence spans 43 residues: Potassium channel toxin gamma-KTx 3.2 (43 aa).

Disulfide bonds link C5–C23, C11–C34, C20–C39, and C24–C41.

Belongs to the ergtoxin family. Gamma-KTx 3 subfamily. In terms of tissue distribution, expressed by the venom gland.

Its subcellular location is the secreted. Functionally, blocks Kv11/ERG potassium channels. In Centruroides elegans (Bark scorpion), this protein is Potassium channel toxin gamma-KTx 3.2.